The primary structure comprises 772 residues: NAD(P)H-quinone oxidoreductase subunit 5, chloroplastic (772 aa).

The next 15 helical transmembrane spans lie at 8–28 (IWIV…GLFF), 39–59 (ICAI…FSIF), 87–107 (FLID…GILV), 120–140 (GYVR…GLVL), 147–167 (IYIF…FWFS), 185–205 (GDFG…SFDI), 219–239 (NGVN…GPAA), 258–278 (TPIS…FFVA), 291–311 (MNII…IALA), 395–415 (GTTF…ACFW), 425–445 (WIAS…TGFY), 574–594 (LFSL…GVPF), 631–651 (IPSV…YGPV), 710–730 (WIID…GEGM), and 738–758 (IPSY…ILII).

Belongs to the complex I subunit 5 family. NDH is composed of at least 16 different subunits, 5 of which are encoded in the nucleus.

It is found in the plastid. The protein localises to the chloroplast thylakoid membrane. It carries out the reaction a plastoquinone + NADH + (n+1) H(+)(in) = a plastoquinol + NAD(+) + n H(+)(out). It catalyses the reaction a plastoquinone + NADPH + (n+1) H(+)(in) = a plastoquinol + NADP(+) + n H(+)(out). NDH shuttles electrons from NAD(P)H:plastoquinone, via FMN and iron-sulfur (Fe-S) centers, to quinones in the photosynthetic chain and possibly in a chloroplast respiratory chain. The immediate electron acceptor for the enzyme in this species is believed to be plastoquinone. Couples the redox reaction to proton translocation, and thus conserves the redox energy in a proton gradient. This Angiopteris evecta (Mule's foot fern) protein is NAD(P)H-quinone oxidoreductase subunit 5, chloroplastic (ndhF).